A 448-amino-acid polypeptide reads, in one-letter code: Pre-mRNA-splicing factor SAD1 (448 aa).

The residue at position 1 (M1) is an N-acetylmethionine. Residues 27–124 form a UBP-type; degenerate zinc finger; it reads PNYAYLETVV…NSIKFAAYPT (98 aa). Zn(2+) contacts are provided by C60, C63, H79, and H85. In terms of domain architecture, USP spans 150–447; it reads IGFTNAATYD…ETFIQVWEKQ (298 aa).

In terms of assembly, component of the 45S U1.U2.U4/U6.U5 penta-snRNP particle, a subcomplex of the spliceosome.

It is found in the nucleus. Promotes the assembly of newly synthesized U4 snRNA into the U4/U6 snRNP particle. Required for splicing of pre-mRNA. This Saccharomyces cerevisiae (strain ATCC 204508 / S288c) (Baker's yeast) protein is Pre-mRNA-splicing factor SAD1 (SAD1).